Here is a 386-residue protein sequence, read N- to C-terminus: 3-ketoacyl-CoA thiolase (386 aa).

The Acyl-thioester intermediate role is filled by Cys-91. Active-site proton acceptor residues include His-342 and Cys-372.

Belongs to the thiolase-like superfamily. Thiolase family. As to quaternary structure, heterotetramer of two alpha chains (FadB) and two beta chains (FadA).

The protein resides in the cytoplasm. The enzyme catalyses an acyl-CoA + acetyl-CoA = a 3-oxoacyl-CoA + CoA. Its pathway is lipid metabolism; fatty acid beta-oxidation. In terms of biological role, catalyzes the final step of fatty acid oxidation in which acetyl-CoA is released and the CoA ester of a fatty acid two carbons shorter is formed. The chain is 3-ketoacyl-CoA thiolase from Pseudoalteromonas atlantica (strain T6c / ATCC BAA-1087).